The chain runs to 426 residues: Glucan 1,3-beta-glucosidase (426 aa).

An N-terminal signal peptide occupies residues 1 to 20; sequence MLYPRALLPAAVALASLVLA. E208 functions as the Proton donor in the catalytic mechanism. 2 cysteine pairs are disulfide-bonded: C290–C416 and C315–C343. E307 (nucleophile) is an active-site residue.

The protein belongs to the glycosyl hydrolase 5 (cellulase A) family.

Its subcellular location is the secreted. It carries out the reaction Successive hydrolysis of beta-D-glucose units from the non-reducing ends of (1-&gt;3)-beta-D-glucans, releasing alpha-glucose.. Functionally, beta-glucanases participate in the metabolism of beta-glucan, the main structural component of the cell wall. It could also function biosynthetically as a transglycosylase. This Blumeria graminis (Powdery mildew) protein is Glucan 1,3-beta-glucosidase.